Reading from the N-terminus, the 123-residue chain is Beta-2-microglobulin (123 aa).

The N-terminal stretch at Met1–Ala21 is a signal peptide. In terms of domain architecture, Ig-like C1-type spans Pro29–Lys118. Cys49 and Cys104 are disulfide-bonded.

It belongs to the beta-2-microglobulin family. Heterodimer of an alpha chain and a beta chain. Beta-2-microglobulin is the beta-chain of major histocompatibility complex class I molecules.

It localises to the secreted. In terms of biological role, component of the class I major histocompatibility complex (MHC). Involved in the presentation of peptide antigens to the immune system. The sequence is that of Beta-2-microglobulin (B2M) from Monodelphis domestica (Gray short-tailed opossum).